The primary structure comprises 310 residues: Olfactory receptor 8G3 (310 aa).

At 1–25 the chain is on the extracellular side; that stretch reads MDPGNHSSVTESILAGLSEQPELQL. A glycan (N-linked (GlcNAc...) asparagine) is linked at asparagine 5. A helical transmembrane segment spans residues 26–46; sequence RLFLLFLGICVVTVVGNLGMI. Over 47–54 the chain is Cytoplasmic; the sequence is TLIGLSSH. The chain crosses the membrane as a helical span at residues 55-75; the sequence is LHTPMYYFLSSLSFIDFCHST. The Extracellular portion of the chain corresponds to 76 to 99; it reads VITPKMLVNFATEKNIISYPECMA. An intrachain disulfide couples cysteine 97 to cysteine 189. A helical membrane pass occupies residues 100–120; sequence QLYLFSIFAIAECHMLAAMAY. At 121–139 the chain is on the cytoplasmic side; sequence DCYVAICSPLLYNVIMSYH. A helical membrane pass occupies residues 140–160; that stretch reads HCFWLTVGVYILGILGSTIHT. The Extracellular portion of the chain corresponds to 161–197; sequence SFMLRLFLCKTNVINHYFCDLFPLLGLSCSSTYINEL. The chain crosses the membrane as a helical span at residues 198 to 217; the sequence is LVLVLSAFNILMPALTILAS. Topologically, residues 218–237 are cytoplasmic; the sequence is YIFIIASILRIHSTEGRSKA. Residues 238-258 traverse the membrane as a helical segment; it reads FSTCSSHILAVAVFFGSAAFM. Residues 259–271 are Extracellular-facing; the sequence is YLQPSSVSSMDQR. Residues 272-292 traverse the membrane as a helical segment; sequence KVSSVFYTTIVPMLNPLIYSL. The Cytoplasmic segment spans residues 293 to 310; sequence RNKDVKLAVKKILHQTAC.

The protein belongs to the G-protein coupled receptor 1 family.

The protein localises to the cell membrane. Odorant receptor. The chain is Olfactory receptor 8G3 from Homo sapiens (Human).